Consider the following 231-residue polypeptide: Large ribosomal subunit protein uL1 (231 aa).

Belongs to the universal ribosomal protein uL1 family. As to quaternary structure, part of the 50S ribosomal subunit.

Functionally, binds directly to 23S rRNA. The L1 stalk is quite mobile in the ribosome, and is involved in E site tRNA release. Its function is as follows. Protein L1 is also a translational repressor protein, it controls the translation of the L11 operon by binding to its mRNA. This is Large ribosomal subunit protein uL1 from Shouchella clausii (strain KSM-K16) (Alkalihalobacillus clausii).